Consider the following 1178-residue polypeptide: Pyruvate carboxylase, mitochondrial (1178 aa).

The N-terminal 20 residues, 1–20 (MLKFQTVRGGLRLLGVRRSS), are a transit peptide targeting the mitochondrion. K35 and K39 each carry N6-acetyllysine. The region spanning 36–486 (PIKKVMVANR…DTQFIDENPE (451 aa)) is the Biotin carboxylation domain. K79 bears the N6-acetyllysine; alternate mark. Residue K79 is modified to N6-succinyllysine; alternate. 2 positions are modified to N6-acetyllysine: K148 and K152. 2 residues coordinate ATP: K152 and E236. One can recognise an ATP-grasp domain in the interval 156 to 353 (RAIAIAAGVP…LVHAQIHVSE (198 aa)). Residue K241 is modified to N6-acetyllysine. Residue H271 participates in ATP binding. N6-acetyllysine is present on residues K297, K316, and K319. R328 is an active-site residue. N6-acetyllysine is present on K434. Residue K442 is modified to N6-succinyllysine. A Pyruvate carboxyltransferase domain is found at 563–832 (LLLMDTTFRD…DTEVPLERVF (270 aa)). 571-575 (RDAHQ) lines the substrate pocket. D572 contacts Mn(2+). K589 carries the post-translational modification N6-acetyllysine. Substrate is bound at residue R644. Residues K661 and K717 each carry the N6-acetyllysine modification. K741 lines the Mn(2+) pocket. N6-carboxylysine is present on K741. N6-acetyllysine is present on K748. Mn(2+) is bound by residues H771 and H773. K892 bears the N6-acetyllysine mark. T908 contributes to the substrate binding site. An N6-acetyllysine modification is found at K969. At K988 the chain carries N6-acetyllysine; alternate. An N6-succinyllysine; alternate modification is found at K988. K992 carries the N6-acetyllysine modification. Phosphothreonine is present on T1003. N6-acetyllysine is present on residues K1061, K1090, and K1124. Residues 1109 to 1178 (KGQIGAPMPG…EGDDLILEIE (70 aa)) form the Biotinyl-binding domain. K1144 is modified (N6-biotinyllysine).

As to quaternary structure, homotetramer. Interacts (via the biotin carboxylation domain) with SIRT4. It depends on biotin as a cofactor. Mn(2+) is required as a cofactor. Post-translationally, acetylation of Lys-748 might play a role in catalytic activity regulation.

The protein localises to the mitochondrion matrix. The catalysed reaction is hydrogencarbonate + pyruvate + ATP = oxaloacetate + ADP + phosphate + H(+). It participates in carbohydrate biosynthesis; gluconeogenesis. Its function is as follows. Pyruvate carboxylase catalyzes a 2-step reaction, involving the ATP-dependent carboxylation of the covalently attached biotin in the first step and the transfer of the carboxyl group to pyruvate in the second. Catalyzes in a tissue specific manner, the initial reactions of glucose (liver, kidney) and lipid (adipose tissue, liver, brain) synthesis from pyruvate. The chain is Pyruvate carboxylase, mitochondrial (Pc) from Rattus norvegicus (Rat).